We begin with the raw amino-acid sequence, 236 residues long: Apoptosis regulator Bcl-2 (236 aa).

The short motif at 10–30 (DNREIVMKYIHYKLSQRGYEW) is the BH4 element. Residue Thr69 is modified to Phosphothreonine; by MAPK8. Ser70 carries the phosphoserine; by MAPK8 and PKC modification. Phosphoserine; by MAPK8 is present on Ser84. Residues 90–104 (VHLTLRRAGDDFSRR) carry the BH3 motif. A BH1 motif is present at residues 133–152 (ELFRDGVNWGRIVAFFEFGG). The BH2 signature appears at 184–199 (TWIQDNGGWDAFVELY). Residues 209–230 (FSWLSLKTLLSLALVGACITLG) form a helical membrane-spanning segment.

Belongs to the Bcl-2 family. As to quaternary structure, forms homodimers, and heterodimers with BAX, BAD, BAK and Bcl-X(L). Heterodimerization with BAX requires intact BH1 and BH2 motifs, and is necessary for anti-apoptotic activity. Component of the complex, at least composed of LRPPRC, BECN1 and BCL2; the interactions prevent BECN1 from forming an autophagy-inducing complex with PIK3C3. Interacts with EI24. Also interacts with APAF1, BBC3, BCL2L1, BNIPL, MRPL41 and TP53BP2. Binding to FKBP8 seems to target BCL2 to the mitochondria and probably interferes with the binding of BCL2 to its targets. Interacts with BAG1 in an ATP-dependent manner. Interacts with RAF1 (the 'Ser-338' and 'Ser-339' phosphorylated form). Interacts (via the BH4 domain) with EGLN3; the interaction prevents the formation of the BAX-BCL2 complex and inhibits the anti-apoptotic activity of BCL2. Interacts with G0S2; this interaction also prevents the formation of the anti-apoptotic BAX-BCL2 complex. Interacts with RTL10/BOP. Interacts with the SCF(FBXO10) complex. Interacts (via the loop between motifs BH4 and BH3) with NLRP1 (via LRR repeats), but not with NLRP2, NLRP3, NLRP4, PYCARD, nor MEFV. Interacts with GIMAP3/IAN4, GIMAP4/IAN1 and GIMAP5/IAN5. Interacts with BCAP31. Interacts with IRF3; the interaction is inhibited by Sendai virus infection. Interacts with BECN1; thereby inhibiting autophagy in non-starvation conditions. Interacts with AMBRA1; thereby inhibiting autophagy. Phosphorylation/dephosphorylation on Ser-70 regulates anti-apoptotic activity. Growth factor-stimulated phosphorylation on Ser-70 by PKC is required for the anti-apoptosis activity and occurs during the G2/M phase of the cell cycle. In the absence of growth factors, BCL2 appears to be phosphorylated by other protein kinases such as ERKs and stress-activated kinases. Phosphorylated by MAPK8/JNK1 at Thr-69, Ser-70 and Ser-84, which stimulates starvation-induced autophagy. Dephosphorylated by protein phosphatase 2A (PP2A). In terms of processing, proteolytically cleaved by caspases during apoptosis. The cleaved protein, lacking the BH4 motif, has pro-apoptotic activity, causes the release of cytochrome c into the cytosol promoting further caspase activity. Post-translationally, monoubiquitinated by PRKN, leading to an increase in its stability. Ubiquitinated by SCF(FBXO10), leading to its degradation by the proteasome.

The protein localises to the mitochondrion outer membrane. Its subcellular location is the nucleus membrane. The protein resides in the endoplasmic reticulum membrane. It is found in the cytoplasm. Functionally, suppresses apoptosis in a variety of cell systems including factor-dependent lymphohematopoietic and neural cells. Regulates cell death by controlling the mitochondrial membrane permeability. Appears to function in a feedback loop system with caspases. Inhibits caspase activity either by preventing the release of cytochrome c from the mitochondria and/or by binding to the apoptosis-activating factor (APAF-1). Also acts as an inhibitor of autophagy: interacts with BECN1 and AMBRA1 during non-starvation conditions and inhibits their autophagy function. May attenuate inflammation by impairing NLRP1-inflammasome activation, hence CASP1 activation and IL1B release. The protein is Apoptosis regulator Bcl-2 (BCL2) of Cricetulus griseus (Chinese hamster).